Here is a 151-residue protein sequence, read N- to C-terminus: Deoxyuridine 5'-triphosphate nucleotidohydrolase (151 aa).

Substrate-binding positions include 70 to 72, asparagine 83, and 87 to 89; these read RSG and VID.

Belongs to the dUTPase family. It depends on Mg(2+) as a cofactor.

It carries out the reaction dUTP + H2O = dUMP + diphosphate + H(+). The protein operates within pyrimidine metabolism; dUMP biosynthesis; dUMP from dCTP (dUTP route): step 2/2. Its function is as follows. This enzyme is involved in nucleotide metabolism: it produces dUMP, the immediate precursor of thymidine nucleotides and it decreases the intracellular concentration of dUTP so that uracil cannot be incorporated into DNA. This Desulfitobacterium hafniense (strain DSM 10664 / DCB-2) protein is Deoxyuridine 5'-triphosphate nucleotidohydrolase.